A 437-amino-acid chain; its full sequence is Ribosomal protein uS12 methylthiotransferase RimO (437 aa).

One can recognise an MTTase N-terminal domain in the interval 4–114 (PRISFVSLGC…VIEAVHTAIP (111 aa)). [4Fe-4S] cluster-binding residues include cysteine 13, cysteine 49, cysteine 78, cysteine 145, cysteine 149, and cysteine 152. The region spanning 131–369 (LTPRHYAYLK…MAKQQQISTH (239 aa)) is the Radical SAM core domain. Positions 372 to 437 (KKKIGKRLQV…DAYDLYGIAV (66 aa)) constitute a TRAM domain.

It belongs to the methylthiotransferase family. RimO subfamily. The cofactor is [4Fe-4S] cluster.

It localises to the cytoplasm. It carries out the reaction L-aspartate(89)-[ribosomal protein uS12]-hydrogen + (sulfur carrier)-SH + AH2 + 2 S-adenosyl-L-methionine = 3-methylsulfanyl-L-aspartate(89)-[ribosomal protein uS12]-hydrogen + (sulfur carrier)-H + 5'-deoxyadenosine + L-methionine + A + S-adenosyl-L-homocysteine + 2 H(+). Catalyzes the methylthiolation of an aspartic acid residue of ribosomal protein uS12. The chain is Ribosomal protein uS12 methylthiotransferase RimO from Bartonella tribocorum (strain CIP 105476 / IBS 506).